Reading from the N-terminus, the 344-residue chain is L-rhamnose-proton symporter (344 aa).

Helical transmembrane passes span 4-24 (AITMGIFWHLIGAASAACFYA), 38-58 (WSVGGIVSWIILPWAISALLL), 74-94 (LPVFLFGAMWGIGNINYGLTM), 101-121 (MGIGIAIGITLIVGTLMTPII), 137-157 (TLLGVLVALIGVGIVTRAGQL), 175-195 (LVLAVMCGIFSAGMSFAMNAA), 214-234 (LPSYVVIMGGGAIINLGFCFI), 259-279 (VLLSTLGGLMWYLQFFFYAWG), 290-310 (ISWMLHMSFYVLCGGIVGLVL), and 323-343 (VLSLGCVVIIVAANIVGIGMA).

It belongs to the L-rhamnose transporter (TC 2.A.7.6) family.

The protein localises to the cell inner membrane. It catalyses the reaction L-rhamnopyranose(in) + H(+)(in) = L-rhamnopyranose(out) + H(+)(out). Uptake of L-rhamnose across the cytoplasmic membrane with the concomitant transport of protons into the cell (symport system). In Escherichia coli (strain K12 / MC4100 / BW2952), this protein is L-rhamnose-proton symporter.